Reading from the N-terminus, the 279-residue chain is Large ribosomal subunit protein uL2 (279 aa).

Disordered stretches follow at residues 1 to 59 (MGIR…GGHK) and 224 to 279 (VAMN…KNKR). Residues 50-59 (TTRHKGGGHK) show a composition bias toward basic residues. Over residues 253 to 268 (REGRTRRPNKESDKLI) the composition is skewed to basic and acidic residues. Residues 269–279 (VRRRRTGKNKR) are compositionally biased toward basic residues.

The protein belongs to the universal ribosomal protein uL2 family. As to quaternary structure, part of the 50S ribosomal subunit. Forms a bridge to the 30S subunit in the 70S ribosome.

One of the primary rRNA binding proteins. Required for association of the 30S and 50S subunits to form the 70S ribosome, for tRNA binding and peptide bond formation. It has been suggested to have peptidyltransferase activity; this is somewhat controversial. Makes several contacts with the 16S rRNA in the 70S ribosome. This is Large ribosomal subunit protein uL2 from Pseudarthrobacter chlorophenolicus (strain ATCC 700700 / DSM 12829 / CIP 107037 / JCM 12360 / KCTC 9906 / NCIMB 13794 / A6) (Arthrobacter chlorophenolicus).